The following is a 130-amino-acid chain: UPF0251 protein Mevan_1492 (130 aa).

The protein belongs to the UPF0251 family.

In Methanococcus vannielii (strain ATCC 35089 / DSM 1224 / JCM 13029 / OCM 148 / SB), this protein is UPF0251 protein Mevan_1492.